We begin with the raw amino-acid sequence, 97 residues long: uncharacterized protein (97 aa).

This is an uncharacterized protein from Mycobacterium tuberculosis (strain CDC 1551 / Oshkosh).